The sequence spans 521 residues: Bacillolysin (521 aa).

Positions 1–27 (MGLGKKLSVAVAASFMSLSISLPGVQA) are cleaved as a signal peptide. Residues 28–221 (AEGHQLKENQ…ILKQQNKVEH (194 aa)) constitute a propeptide, activation peptide. Asp360 contributes to the Ca(2+) binding site. Position 364 (His364) interacts with Zn(2+). The active site involves Glu365. Residues His368 and Glu388 each contribute to the Zn(2+) site. Ca(2+) contacts are provided by Asp399, Asp402, Asp404, and Glu407. His449 functions as the Proton donor in the catalytic mechanism.

It belongs to the peptidase M4 family. Ca(2+) is required as a cofactor. Requires Zn(2+) as cofactor.

It localises to the secreted. The enzyme catalyses Similar, but not identical, to that of thermolysin.. In terms of biological role, extracellular zinc metalloprotease. This Bacillus subtilis subsp. amylosacchariticus protein is Bacillolysin (nprE).